The sequence spans 149 residues: Dehydrin Rab15 (149 aa).

A disordered region spans residues 1–149; sequence MEFQGQHDNP…KIKEKLPGQH (149 aa). Residues 78-93 are compositionally biased toward basic and acidic residues; that stretch reads KEKIKEKLPGGHKDNQ. The span at 100-117 shows a compositional bias: gly residues; the sequence is TGTGGAYGPGTGTGGAYG. Residues 132–149 show a composition bias toward basic and acidic residues; sequence GEKKGIMDKIKEKLPGQH.

It belongs to the plant dehydrin family.

The polypeptide is Dehydrin Rab15 (RAB15) (Triticum aestivum (Wheat)).